Consider the following 558-residue polypeptide: MLGMKPLGFIGNGLTSALVDNGSIVWLTFPRFDSPSVFGKLLDDNAGEFSIRPVEDKFKVSQSYLVPNVLSTTFKSSNGKAEIVDLMPIGEKAIIRKVRTEIPLSFKIIPMFNYGLYRPIIRRKDDGIQFLNPVSRECLSLLSDVPTDEIKPPGTTLYLVYSSDCAYGPLDKGKQLENDLENSFNLTIDYWKDKIRSNDEVWRTSVGVLLGLIYSPSGSSIAAATTSLPEAVGDSRNWDYRFVWVRDSSMISEALLYSGYVVEARRILNFMLALVNFTAKPLLHPLYAVDGSDPPPEIEIPWLSGYMNSRPVRVGNAAASQIQLDIEGFLVDAIYKYYKYTSDRVFVEENWDKIKYIGDWVSKNWMLKDAGMWEDRGDPKHYTHSKVMMWVALDRIEKIMNVKIHEKDEIKEWVMRNCVKDGSFVRSSDSNDVDANLLTLPLYDFIDVKDPIFLKTLKRIEDELYVDGFVKRYSQDFMGEAKHPFALATIWLARVYIRLGRKERAMELLDKVLKPSGTLYLIGEHIDVENMEYTGNYPQAFVHAQLLLALKEVKGLST.

This sequence belongs to the glycosyl hydrolase 15 family.

The enzyme catalyses alpha,alpha-trehalose + H2O = alpha-D-glucose + beta-D-glucose. The protein operates within glycan degradation; trehalose degradation; D-glucose from alpha,alpha-trehalose: step 1/1. Its function is as follows. Catalyzes the hydrolysis of alpha,alpha-trehalose into two molecules of D-glucose. This is Trehalase 1 (treH1) from Sulfolobus acidocaldarius (strain ATCC 33909 / DSM 639 / JCM 8929 / NBRC 15157 / NCIMB 11770).